Here is a 155-residue protein sequence, read N- to C-terminus: Cell division protein SepF (155 aa).

The span at 16–35 (TEDEEEDVETVEESEDVEEE) shows a compositional bias: acidic residues. The disordered stretch occupies residues 16–44 (TEDEEEDVETVEESEDVEEEESKKPQFIQ).

Belongs to the SepF family. Homodimer. Interacts with FtsZ.

Its subcellular location is the cytoplasm. Its function is as follows. Cell division protein that is part of the divisome complex and is recruited early to the Z-ring. Probably stimulates Z-ring formation, perhaps through the cross-linking of FtsZ protofilaments. Its function overlaps with FtsA. The protein is Cell division protein SepF of Acetivibrio thermocellus (strain ATCC 27405 / DSM 1237 / JCM 9322 / NBRC 103400 / NCIMB 10682 / NRRL B-4536 / VPI 7372) (Clostridium thermocellum).